A 551-amino-acid polypeptide reads, in one-letter code: Probable terminase, large subunit gp28 (551 aa).

It belongs to the T4likevirus large terminase family. Interacts with the terminase small subunit gp28. Mg(2+) is required as a cofactor.

Its subcellular location is the host cytoplasm. In terms of biological role, the terminase large subunit acts as an ATP driven molecular motor necessary for viral DNA translocation into empty capsids and as an endonuclease that cuts the viral genome to initiate and to end a packaging reaction. The terminase lies at a unique vertex of the procapsid and is composed of two subunits, a small terminase subunit involved in viral DNA recognition (packaging sequence), and a large terminase subunit possessing endonucleolytic and ATPase activities. Both terminase subunits heterooligomerize and are docked on the portal protein to form the packaging machine. The terminase large subunit exhibits endonuclease activity and cleaves the viral genome concatemer once the capsid is full (headful packaging). Once the capsid is packaged with the DNA, the terminase complex is substituted by neck proteins. This is Probable terminase, large subunit gp28 from Escherichia phage Mu (Bacteriophage Mu).